The following is a 320-amino-acid chain: N-acetylneuraminate lyase (320 aa).

The aceneuramate site is built by threonine 51 and threonine 52. Tyrosine 143 (proton donor) is an active-site residue. Residue lysine 173 is the Schiff-base intermediate with substrate of the active site. The aceneuramate site is built by threonine 175, glycine 199, aspartate 201, glutamate 202, and serine 218. Serine 308 carries the post-translational modification Phosphoserine.

The protein belongs to the DapA family. NanA subfamily. Homotetramer.

It is found in the cytoplasm. The catalysed reaction is aceneuramate = aldehydo-N-acetyl-D-mannosamine + pyruvate. Its pathway is amino-sugar metabolism; N-acetylneuraminate degradation. In terms of biological role, catalyzes the cleavage of N-acetylneuraminic acid (sialic acid) to form pyruvate and N-acetylmannosamine via a Schiff base intermediate. It prevents sialic acids from being recycled and returning to the cell surface. Involved in the N-glycolylneuraminic acid (Neu5Gc) degradation pathway. This chain is N-acetylneuraminate lyase, found in Mus musculus (Mouse).